Consider the following 85-residue polypeptide: Small ribosomal subunit protein eS21 (85 aa).

This sequence belongs to the eukaryotic ribosomal protein eS21 family. Component of the 40S small ribosomal subunit.

It is found in the cytoplasm. The protein localises to the cytosol. Its subcellular location is the rough endoplasmic reticulum. The sequence is that of Small ribosomal subunit protein eS21 (rps-21) from Pectinaria gouldii (Trumpet worm).